Reading from the N-terminus, the 558-residue chain is Dihydroxy-acid dehydratase (558 aa).

Cys-49 contributes to the [2Fe-2S] cluster binding site. A Mg(2+)-binding site is contributed by Asp-81. A [2Fe-2S] cluster-binding site is contributed by Cys-122. Asp-123 and Lys-124 together coordinate Mg(2+). N6-carboxylysine is present on Lys-124. [2Fe-2S] cluster is bound at residue Cys-194. Glu-446 is a Mg(2+) binding site. Ser-472 (proton acceptor) is an active-site residue.

The protein belongs to the IlvD/Edd family. Homodimer. The cofactor is [2Fe-2S] cluster. It depends on Mg(2+) as a cofactor.

It catalyses the reaction (2R)-2,3-dihydroxy-3-methylbutanoate = 3-methyl-2-oxobutanoate + H2O. The enzyme catalyses (2R,3R)-2,3-dihydroxy-3-methylpentanoate = (S)-3-methyl-2-oxopentanoate + H2O. It participates in amino-acid biosynthesis; L-isoleucine biosynthesis; L-isoleucine from 2-oxobutanoate: step 3/4. The protein operates within amino-acid biosynthesis; L-valine biosynthesis; L-valine from pyruvate: step 3/4. Functionally, functions in the biosynthesis of branched-chain amino acids. Catalyzes the dehydration of (2R,3R)-2,3-dihydroxy-3-methylpentanoate (2,3-dihydroxy-3-methylvalerate) into 2-oxo-3-methylpentanoate (2-oxo-3-methylvalerate) and of (2R)-2,3-dihydroxy-3-methylbutanoate (2,3-dihydroxyisovalerate) into 2-oxo-3-methylbutanoate (2-oxoisovalerate), the penultimate precursor to L-isoleucine and L-valine, respectively. This chain is Dihydroxy-acid dehydratase, found in Synechococcus sp. (strain RCC307).